The chain runs to 200 residues: Large ribosomal subunit protein uL4 (200 aa).

A disordered region spans residues 43–70; it reads RAQKTRAEVSGSGKKPWRQKGTGRARSG.

Belongs to the universal ribosomal protein uL4 family. In terms of assembly, part of the 50S ribosomal subunit.

Its function is as follows. One of the primary rRNA binding proteins, this protein initially binds near the 5'-end of the 23S rRNA. It is important during the early stages of 50S assembly. It makes multiple contacts with different domains of the 23S rRNA in the assembled 50S subunit and ribosome. Forms part of the polypeptide exit tunnel. The protein is Large ribosomal subunit protein uL4 of Glaesserella parasuis serovar 5 (strain SH0165) (Haemophilus parasuis).